The following is a 261-amino-acid chain: uncharacterized protein (261 aa).

The region spanning 15–75 is the HTH tetR-type domain; that stretch reads SINPEDIISG…AMTDRALSKY (61 aa). A DNA-binding region (H-T-H motif) is located at residues 38 to 57; sequence SMPLLGKHLGVGVTSIYWYF. Residues 234-261 are disordered; the sequence is AAGEVAVRRPTATADAPTPGARAKAVAR. Residues 241 to 261 show a composition bias toward low complexity; that stretch reads RRPTATADAPTPGARAKAVAR.

This is an uncharacterized protein from Mycobacterium bovis (strain ATCC BAA-935 / AF2122/97).